Here is a 501-residue protein sequence, read N- to C-terminus: Adenylosuccinate synthetase 2, chloroplastic (501 aa).

GTP is bound by residues Gly87–Lys93 and Gly115–Thr117. Catalysis depends on Asp88, which acts as the Proton acceptor. Residues Asp88 and Gly115 each contribute to the Mg(2+) site. Residues Asp88–Lys91, Asn113–His116, Thr205, Arg219, Gln300, Thr315, and Arg379 contribute to the IMP site. His116 acts as the Proton donor in catalysis. Asn375–Arg381 is a substrate binding site. GTP is bound by residues Arg381, Lys407–Asp409, and Gly490–Gly492.

The protein belongs to the adenylosuccinate synthetase family. As to quaternary structure, homodimer. The cofactor is Mg(2+).

The protein resides in the plastid. The protein localises to the chloroplast. It catalyses the reaction IMP + L-aspartate + GTP = N(6)-(1,2-dicarboxyethyl)-AMP + GDP + phosphate + 2 H(+). The protein operates within purine metabolism; AMP biosynthesis via de novo pathway; AMP from IMP: step 1/2. Functionally, plays an important role in the de novo pathway and in the salvage pathway of purine nucleotide biosynthesis. Catalyzes the first committed step in the biosynthesis of AMP from IMP. This is Adenylosuccinate synthetase 2, chloroplastic from Capsicum frutescens (Cayenne pepper).